The chain runs to 561 residues: Sesquiterpene synthase 2 (561 aa).

The Mg(2+) site is built by Asp313, Asp317, Asp458, and Glu466. Positions 313–317 (DDIYD) match the DDXXD motif motif.

Belongs to the terpene synthase family. Tpsa subfamily. The cofactor is Mn(2+). Mg(2+) is required as a cofactor.

It is found in the cytoplasm. The enzyme catalyses (2E,6E)-farnesyl diphosphate + H2O = kunzeaol + diphosphate. It functions in the pathway secondary metabolite biosynthesis; terpenoid biosynthesis. Functionally, involved in the biosynthesis of kunzeaol. Produces mainly (-)-germacrene D along with gamma-cadinene. This Thapsia garganica (Deadly carrot) protein is Sesquiterpene synthase 2 (STS2).